The chain runs to 435 residues: 4-hydroxy-3-methylbut-2-en-1-yl diphosphate synthase (flavodoxin) (435 aa).

Over residues 1 to 15 the composition is skewed to basic and acidic residues; it reads MTDVDLRARPQEGMK. Positions 1 to 24 are disordered; sequence MTDVDLRARPQEGMKEIPAGPKGR. [4Fe-4S] cluster contacts are provided by C316, C319, C362, and E369.

It belongs to the IspG family. It depends on [4Fe-4S] cluster as a cofactor.

It carries out the reaction (2E)-4-hydroxy-3-methylbut-2-enyl diphosphate + oxidized [flavodoxin] + H2O + 2 H(+) = 2-C-methyl-D-erythritol 2,4-cyclic diphosphate + reduced [flavodoxin]. Its pathway is isoprenoid biosynthesis; isopentenyl diphosphate biosynthesis via DXP pathway; isopentenyl diphosphate from 1-deoxy-D-xylulose 5-phosphate: step 5/6. Converts 2C-methyl-D-erythritol 2,4-cyclodiphosphate (ME-2,4cPP) into 1-hydroxy-2-methyl-2-(E)-butenyl 4-diphosphate. This Afipia carboxidovorans (strain ATCC 49405 / DSM 1227 / KCTC 32145 / OM5) (Oligotropha carboxidovorans) protein is 4-hydroxy-3-methylbut-2-en-1-yl diphosphate synthase (flavodoxin).